The following is a 555-amino-acid chain: MTTARPAKARNEGQWALGNREPLNPNEEMKQAGAPLAVRERIETIYAKNGFDSIDKSDLRGRFRWWGLYTQREQGYDGSWTGDENIEKLEARYFMMRVRCDGGAISAAALRTLGQISVDFARDTADITDRENIQYHWIEVENVPEIWRRLDAVGLRTTEACGDCPRVILGSPLAGESLEEVIDPSWAIAEIARRYIGQPDFADLPRKYKTAISGLQDVAHEVNDVAFIGVNHPEHGPGLDLWVGGGLSTNPMLAQRVGAWVPLHEVPEVWAAVTSVFRDYGYRRLRSKARLKFLVKDWGIEKFREVLETEYLKRPLIDGPAPEPVAHPIDHVGVQRLKNGLNAVGVAPIAGRVSGTILLAVADLAQQAGCDRIRFTPYQKLVLLDIPDDKLDEVVAGLEALGLQSQPSHWRRNLMACSGIEFCKLSFAETRVRAQGLVPELERRLADVNRQLDVPITINLNGCPNSCARIQVADIGLKGQMVDDGEGGSVEGFQVHLGGSLGQDSGFGRKLRQHKVTSDELGDYIERVARNFVKYRGEGERFAQWAMRADEDDLR.

The interval 1-31 (MTTARPAKARNEGQWALGNREPLNPNEEMKQ) is disordered. A cross-link (3'-(S-cysteinyl)-tyrosine (Tyr-Cys)) is located at residues 69 to 161 (YTQREQGYDG…AVGLRTTEAC (93 aa)). The [4Fe-4S] cluster site is built by Cys-417, Cys-423, Cys-463, and Cys-467. Residue Cys-467 participates in siroheme binding.

The protein belongs to the nitrite and sulfite reductase 4Fe-4S domain family. As to quaternary structure, monomer. It depends on siroheme as a cofactor. [4Fe-4S] cluster is required as a cofactor.

The catalysed reaction is hydrogen sulfide + 6 oxidized [2Fe-2S]-[ferredoxin] + 3 H2O = sulfite + 6 reduced [2Fe-2S]-[ferredoxin] + 7 H(+). In terms of biological role, catalyzes the reduction of sulfite to sulfide, a step in the biosynthesis of sulfur-containing amino acids and cofactors. The polypeptide is Sulfite reductase [ferredoxin] 2 (sir2) (Mycolicibacterium paratuberculosis (strain ATCC BAA-968 / K-10) (Mycobacterium paratuberculosis)).